Consider the following 1914-residue polypeptide: Fatty acid synthase beta subunit stcK (1914 aa).

The segment at 17–395 is acetyltransferase (AT) domain; the sequence is LYACFGGQGP…LEGTGMNVVN (379 aa). The interval 446 to 692 is enoyl reductase (ER) domain; it reads TRLLGTPHVM…LIVEAPGVKD (247 aa). Positions 1009–1509 are dehydratase (DH) domain; the sequence is GECAWGYAAL…RANDRLRMEI (501 aa). Positions 1398–1532 constitute a MaoC-like domain; sequence FLNRHGAPRV…VRVLKESTGE (135 aa). The tract at residues 1548-1900 is malonyl/palmitoyl transferase (MT/PT) domain; the sequence is YVFTGQGTQE…IRLVQGVTQS (353 aa).

It belongs to the fungal fatty acid synthetase subunit beta family. As to quaternary structure, [Alpha(6)beta(6)] hexamers of two multifunctional subunits (alpha and beta).

It carries out the reaction acetyl-CoA + n malonyl-CoA + 2n NADPH + 4n H(+) = a long-chain-acyl-CoA + n CoA + n CO2 + 2n NADP(+).. It catalyses the reaction holo-[ACP] + acetyl-CoA = acetyl-[ACP] + CoA. The enzyme catalyses holo-[ACP] + malonyl-CoA = malonyl-[ACP] + CoA. The catalysed reaction is a (3R)-hydroxyacyl-[ACP] = a (2E)-enoyl-[ACP] + H2O. It carries out the reaction a 2,3-saturated acyl-[ACP] + NAD(+) = a (2E)-enoyl-[ACP] + NADH + H(+). It catalyses the reaction (9Z)-octadecenoyl-[ACP] + H2O = (9Z)-octadecenoate + holo-[ACP] + H(+). It functions in the pathway mycotoxin biosynthesis; sterigmatocystin biosynthesis. Functionally, fatty acid synthase beta subunit; part of the gene cluster that mediates the biosynthesis of sterigmatocystin (ST), a polyketide-derived furanocoumarin which is part of the most toxic and carcinogenic compounds among the known mycotoxins. The first step in the biosynthesis of sterigmatocystin is the production of hexanoate by the fatty acid synthase (FAS) units stcJ and stcK. The polyketide backbone is assembled by the non-reducing polyketide synthase stcA by condensation of the starter hexanoyl-CoA and 7 malonyl-CoA extender units followed by cyclization and release of norsolorinic acid. Norsolorinic acid is the first stable intermediate in the biosynthesis of sterigmatocystin and is converted into averantin (AVN) by the ketoreductase stcE which reduces the hexanoate ketone to an alcohol. Averantin is then oxidized into 5'-hydroxyaverantin (HAVN) by the cytochrome P450 monooxygenase stcF. 5'-hydroxyaverantin is further converted to 5'-oxyaverantin (OAVN) by the 5'-hydroxyaverantin dehydrogenase stcG. The next step is the conversion of OAVN into averufin (AVF) which is catalyzed by a yet to be identified enzyme. The cytochrome P450 monooxygenase stcB and the flavin-binding monooxygenase stcW are both required for the conversion of averufin to 1-hydroxyversicolorone. The esterase stcI probably catalyzes the formation of versiconal hemiacetal acetate from 1-hydroxyversicolorone. The oxydoreductase stcN then probably catalyzes the biosynthetic step from versiconal to versicolorin B (VERB). The next step is performed by the versicolorin B desaturase stcL to produce versicolorin A (VERA). The ketoreductase stcU and the cytochrome P450 monooxygenase stcS are involved in the conversion of versicolorin A to demethylsterigmatocystin. The Baeyer-Villiger oxidas stcQ and the reductase stcR might be involved in the biosynthetic step from versicolorin A to demethylsterigmatocystin. The final step in the biosynthesis of sterigmatocystin is the methylation of demethylsterigmatocystin catalyzed by the methyltransferase stcP. In Emericella nidulans (strain FGSC A4 / ATCC 38163 / CBS 112.46 / NRRL 194 / M139) (Aspergillus nidulans), this protein is Fatty acid synthase beta subunit stcK.